The following is a 71-amino-acid chain: Translation initiation factor IF-1 (71 aa).

The S1-like domain maps to methionine 1–lysine 71.

Belongs to the IF-1 family. In terms of assembly, component of the 30S ribosomal translation pre-initiation complex which assembles on the 30S ribosome in the order IF-2 and IF-3, IF-1 and N-formylmethionyl-tRNA(fMet); mRNA recruitment can occur at any time during PIC assembly.

It is found in the cytoplasm. One of the essential components for the initiation of protein synthesis. Stabilizes the binding of IF-2 and IF-3 on the 30S subunit to which N-formylmethionyl-tRNA(fMet) subsequently binds. Helps modulate mRNA selection, yielding the 30S pre-initiation complex (PIC). Upon addition of the 50S ribosomal subunit IF-1, IF-2 and IF-3 are released leaving the mature 70S translation initiation complex. The protein is Translation initiation factor IF-1 of Mycoplasmopsis synoviae (strain 53) (Mycoplasma synoviae).